The chain runs to 120 residues: Large ribosomal subunit protein uL18 (120 aa).

Belongs to the universal ribosomal protein uL18 family. In terms of assembly, part of the 50S ribosomal subunit. Part of the 5S rRNA/L5/L18/L25 subcomplex. Contacts the 23S rRNA and 5S rRNA. Required for catalysis of RNase M5.

This is one of the proteins that bind and probably mediate the attachment of the 5S RNA into the large ribosomal subunit, where it forms part of the central protuberance. Its function is as follows. Required for correct processing of both the 5' and 3' ends of 5S rRNA precursor, which is does in conjunction with ribonuclease M5 (RNase M5, rnmV). Possibly folds the 5S rRNA precursor into the correct conformation, thus acting as a chaperone. The protein is Large ribosomal subunit protein uL18 of Bacillus subtilis (strain 168).